Here is a 346-residue protein sequence, read N- to C-terminus: NADH-ubiquinone oxidoreductase chain 2 (346 aa).

The next 11 helical transmembrane spans lie at 1–21 (MNPHATPVLVLSLALGTTITI), 25–45 (HWVLAWTGLEINTLAIIPLIS), 60–80 (FLTQAAASALVLFSSMTNAWA), 95–115 (CLLLTAAIAIKLGLVPFHFWF), 124–144 (LMTALLLSTLMKFPPLTLLLM), 149–169 (LNPALLTTMALASAALGGWMG), 178–195 (ILAFSSISHLGWIAIILV), 200–219 (LALLTFYLYAIMTSAVFMAL), 242–262 (ATLMLVLLSLAGLPPLTGFMP), 274–294 (EMTPAAMAIAMLSLLSLFFYL), and 326–346 (AILASLSILLLPLSPMIHAIV).

The protein belongs to the complex I subunit 2 family.

It localises to the mitochondrion inner membrane. It catalyses the reaction a ubiquinone + NADH + 5 H(+)(in) = a ubiquinol + NAD(+) + 4 H(+)(out). Its function is as follows. Core subunit of the mitochondrial membrane respiratory chain NADH dehydrogenase (Complex I) that is believed to belong to the minimal assembly required for catalysis. Complex I functions in the transfer of electrons from NADH to the respiratory chain. The immediate electron acceptor for the enzyme is believed to be ubiquinone. The chain is NADH-ubiquinone oxidoreductase chain 2 (MT-ND2) from Mareca falcata (Falcated duck).